The sequence spans 579 residues: CTP synthase (579 aa).

Residues 1–281 (MPALRKHPQT…DAYVVRRLNL (281 aa)) are amidoligase domain. Serine 23 provides a ligand contact to CTP. Serine 23 contributes to the UTP binding site. Residues 24–29 (SLGKGL) and aspartate 81 contribute to the ATP site. Mg(2+) contacts are provided by aspartate 81 and glutamate 155. CTP is bound by residues 162–164 (DIE), 202–207 (KTKPTQ), and lysine 238. UTP-binding positions include 202 to 207 (KTKPTQ) and lysine 238. In terms of domain architecture, Glutamine amidotransferase type-1 spans 306–554 (RIALVGKYID…IGAALDYKAA (249 aa)). Glycine 369 serves as a coordination point for L-glutamine. Catalysis depends on cysteine 396, which acts as the Nucleophile; for glutamine hydrolysis. L-glutamine contacts are provided by residues 397–400 (LGLQ), glutamate 419, and arginine 480. Catalysis depends on residues histidine 527 and glutamate 529.

Belongs to the CTP synthase family. As to quaternary structure, homotetramer.

It catalyses the reaction UTP + L-glutamine + ATP + H2O = CTP + L-glutamate + ADP + phosphate + 2 H(+). The catalysed reaction is L-glutamine + H2O = L-glutamate + NH4(+). The enzyme catalyses UTP + NH4(+) + ATP = CTP + ADP + phosphate + 2 H(+). It participates in pyrimidine metabolism; CTP biosynthesis via de novo pathway; CTP from UDP: step 2/2. Its activity is regulated as follows. Allosterically activated by GTP, when glutamine is the substrate; GTP has no effect on the reaction when ammonia is the substrate. The allosteric effector GTP functions by stabilizing the protein conformation that binds the tetrahedral intermediate(s) formed during glutamine hydrolysis. Inhibited by the product CTP, via allosteric rather than competitive inhibition. Functionally, catalyzes the ATP-dependent amination of UTP to CTP with either L-glutamine or ammonia as the source of nitrogen. Regulates intracellular CTP levels through interactions with the four ribonucleotide triphosphates. This chain is CTP synthase, found in Mycobacterium sp. (strain JLS).